Here is a 57-residue protein sequence, read N- to C-terminus: UPF0391 membrane protein XC_2938 (57 aa).

The next 2 helical transmembrane spans lie at Trp-4 to Ala-24 and Phe-33 to Ala-53.

Belongs to the UPF0391 family.

The protein resides in the cell membrane. The polypeptide is UPF0391 membrane protein XC_2938 (Xanthomonas campestris pv. campestris (strain 8004)).